A 572-amino-acid chain; its full sequence is MPRGVAVRVTTMDAELEFAIQPNTTGKQLFDQVVKTIGLREIWFFGLQYIDSKGLVTWLKLNKKVVAQDLRKDNPLQFKFRVKFYPEEVTEELIQEITQRLFFLQIKEGILSDEVYCPPETSVLLASYAAQAKYGPHSASTKARLTEDTNILPKRVIEQHKMTKEQWYERVSNWHQEHLSLSKEDAITEYMKIAQDLEMYGVNYFEIRNKKGTDLWLGVDALGLNVYEKDDKLTPKIGFPWSEIRNISFNDKKFVIKPIEKKAPDFVFYASRLRINKRILALCMGNHELYMRRRKPDTIEVQQMKAQAKEEKQAKKLEREQLAIEMKKRQETEEKYKRLQQQIREKELAEEKNREDLKRWEEESRAMQEKLKQQQMESEEYQSKVAAMEMQMNEATLEREMTAQEKEEMRARVEALAEEKARLEQSREESLKESAEFAEKLRLSQERERELQEAQEAAAAQHAAQLAAQREAQQLIPKDEGEEDEQDHELEVQQDDNDDLDDKESYLPDKHLLDKLQKLQSELQAMKDESKGEDRYDKIHQENIRAGRDKYQTLRNIRSGNTRQRIDTFENI.

The FERM domain occupies 1 to 294 (MPRGVAVRVT…GNHELYMRRR (294 aa)). Disordered stretches follow at residues 444–508 (SQER…SYLP) and 523–544 (LQAM…QENI). Residues 454 to 475 (AQEAAAAQHAAQLAAQREAQQL) show a composition bias toward low complexity. Residues 480 to 502 (EGEEDEQDHELEVQQDDNDDLDD) show a composition bias toward acidic residues. Over residues 525–544 (AMKDESKGEDRYDKIHQENI) the composition is skewed to basic and acidic residues.

It localises to the cell membrane. It is found in the cytoplasm. The protein localises to the cytoskeleton. The protein resides in the cell projection. Probably involved in connections of major cytoskeletal structures to the plasma membrane. In Lytechinus variegatus (Green sea urchin), this protein is Moesin.